The primary structure comprises 217 residues: MOB kinase activator 3A (217 aa).

Positions 83, 88, 165, and 170 each coordinate Zn(2+).

Belongs to the MOB1/phocein family.

In terms of biological role, may regulate the activity of kinases. The polypeptide is MOB kinase activator 3A (MOB3A) (Homo sapiens (Human)).